The chain runs to 388 residues: Coproporphyrin III ferrochelatase (388 aa).

2 residues coordinate Fe-coproporphyrin III: S59 and Y124. Fe(2+) contacts are provided by H186 and E276. Residues 349–369 (QSPQHASRAVTDAAATGRRGD) form a disordered region.

Belongs to the ferrochelatase family.

It localises to the cytoplasm. The catalysed reaction is Fe-coproporphyrin III + 2 H(+) = coproporphyrin III + Fe(2+). It participates in porphyrin-containing compound metabolism; protoheme biosynthesis. Involved in coproporphyrin-dependent heme b biosynthesis. Catalyzes the insertion of ferrous iron into coproporphyrin III to form Fe-coproporphyrin III. The chain is Coproporphyrin III ferrochelatase from Frankia alni (strain DSM 45986 / CECT 9034 / ACN14a).